We begin with the raw amino-acid sequence, 177 residues long: Large ribosomal subunit protein uL6 (177 aa).

The protein belongs to the universal ribosomal protein uL6 family. In terms of assembly, part of the 50S ribosomal subunit.

In terms of biological role, this protein binds to the 23S rRNA, and is important in its secondary structure. It is located near the subunit interface in the base of the L7/L12 stalk, and near the tRNA binding site of the peptidyltransferase center. This is Large ribosomal subunit protein uL6 from Zymomonas mobilis subsp. mobilis (strain ATCC 31821 / ZM4 / CP4).